A 358-amino-acid polypeptide reads, in one-letter code: MNPFPRAEISSSALQTNLAALRQQAPASRVMAVVKANGYGHGLLNVANCLVSADGFGLARLDEALELRAGGVTARLLLLEGFFRATDLPLLVGHDIDTVVHHSSQLEMLEQTVLSKPVTVWLKVDSGMHRLGFTPEQFSTVYDRLMACPNVAKPIHLMTHFACADEPDNTYTSVQMAAFNSLTAGLPGFRTLANSAGALYWPQSQGDWIRPGIALYGVSPVTGDCGANHGLVPAMELVSQLIAVRDHKANQPVGYGCFWTAKQDTRLGVVAIGYGDGYPRNAPEGTPVWVNGRRVPIVGRVSMDMLTVDLGQDAQDKVGDSALLWGKALPVEEVAEHIGTIAYELVTKLTPRVAVCLA.

K35 (proton acceptor; specific for D-alanine) is an active-site residue. K35 bears the N6-(pyridoxal phosphate)lysine mark. Residue R130 coordinates substrate. Catalysis depends on Y255, which acts as the Proton acceptor; specific for L-alanine. M303 is a binding site for substrate.

Belongs to the alanine racemase family. Pyridoxal 5'-phosphate serves as cofactor.

The enzyme catalyses L-alanine = D-alanine. It functions in the pathway amino-acid biosynthesis; D-alanine biosynthesis; D-alanine from L-alanine: step 1/1. Functionally, catalyzes the interconversion of L-alanine and D-alanine. May also act on other amino acids. The polypeptide is Alanine racemase (alr) (Shewanella baltica (strain OS155 / ATCC BAA-1091)).